The primary structure comprises 67 residues: ATP synthase F(0) complex subunit 8 (67 aa).

Residues 8 to 24 (PWFITILSMIITLFILF) form a helical membrane-spanning segment. Lys54 carries the N6-acetyllysine; alternate modification. At Lys54 the chain carries N6-succinyllysine; alternate. N6-acetyllysine is present on Lys57.

It belongs to the ATPase protein 8 family. In terms of assembly, component of the ATP synthase complex composed at least of ATP5F1A/subunit alpha, ATP5F1B/subunit beta, ATP5MC1/subunit c (homooctomer), MT-ATP6/subunit a, MT-ATP8/subunit 8, ATP5ME/subunit e, ATP5MF/subunit f, ATP5MG/subunit g, ATP5MK/subunit k, ATP5MJ/subunit j, ATP5F1C/subunit gamma, ATP5F1D/subunit delta, ATP5F1E/subunit epsilon, ATP5PF/subunit F6, ATP5PB/subunit b, ATP5PD/subunit d, ATP5PO/subunit OSCP. ATP synthase complex consists of a soluble F(1) head domain (subunits alpha(3) and beta(3)) - the catalytic core - and a membrane F(0) domain - the membrane proton channel (subunits c, a, 8, e, f, g, k and j). These two domains are linked by a central stalk (subunits gamma, delta, and epsilon) rotating inside the F1 region and a stationary peripheral stalk (subunits F6, b, d, and OSCP). Interacts with PRICKLE3.

The protein resides in the mitochondrion membrane. In terms of biological role, subunit 8, of the mitochondrial membrane ATP synthase complex (F(1)F(0) ATP synthase or Complex V) that produces ATP from ADP in the presence of a proton gradient across the membrane which is generated by electron transport complexes of the respiratory chain. ATP synthase complex consist of a soluble F(1) head domain - the catalytic core - and a membrane F(1) domain - the membrane proton channel. These two domains are linked by a central stalk rotating inside the F(1) region and a stationary peripheral stalk. During catalysis, ATP synthesis in the catalytic domain of F(1) is coupled via a rotary mechanism of the central stalk subunits to proton translocation. In vivo, can only synthesize ATP although its ATP hydrolase activity can be activated artificially in vitro. Part of the complex F(0) domain. The polypeptide is ATP synthase F(0) complex subunit 8 (Orycteropus afer (Aardvark)).